We begin with the raw amino-acid sequence, 394 residues long: Chaperone protein DnaJ (394 aa).

The J domain occupies 4–68; sequence DYYEILGVSR…ELRARYDRFG (65 aa). Residues 136-218 form a CR-type zinc finger; sequence GGEKQIRISH…CNGEGLAQTT (83 aa). 8 residues coordinate Zn(2+): C149, C152, C166, C169, C192, C195, C206, and C209. 4 CXXCXGXG motif repeats span residues 149 to 156, 166 to 173, 192 to 199, and 206 to 213; these read CPVCGGSG, CPTCGGAG, and CYNCNGEG.

This sequence belongs to the DnaJ family. In terms of assembly, homodimer. Zn(2+) serves as cofactor.

It is found in the cytoplasm. Functionally, participates actively in the response to hyperosmotic and heat shock by preventing the aggregation of stress-denatured proteins and by disaggregating proteins, also in an autonomous, DnaK-independent fashion. Unfolded proteins bind initially to DnaJ; upon interaction with the DnaJ-bound protein, DnaK hydrolyzes its bound ATP, resulting in the formation of a stable complex. GrpE releases ADP from DnaK; ATP binding to DnaK triggers the release of the substrate protein, thus completing the reaction cycle. Several rounds of ATP-dependent interactions between DnaJ, DnaK and GrpE are required for fully efficient folding. Also involved, together with DnaK and GrpE, in the DNA replication of plasmids through activation of initiation proteins. In Synechococcus sp. (strain JA-3-3Ab) (Cyanobacteria bacterium Yellowstone A-Prime), this protein is Chaperone protein DnaJ.